The chain runs to 236 residues: 2-C-methyl-D-erythritol 4-phosphate cytidylyltransferase (236 aa).

The protein belongs to the IspD/TarI cytidylyltransferase family. IspD subfamily.

It catalyses the reaction 2-C-methyl-D-erythritol 4-phosphate + CTP + H(+) = 4-CDP-2-C-methyl-D-erythritol + diphosphate. Its pathway is isoprenoid biosynthesis; isopentenyl diphosphate biosynthesis via DXP pathway; isopentenyl diphosphate from 1-deoxy-D-xylulose 5-phosphate: step 2/6. In terms of biological role, catalyzes the formation of 4-diphosphocytidyl-2-C-methyl-D-erythritol from CTP and 2-C-methyl-D-erythritol 4-phosphate (MEP). This is 2-C-methyl-D-erythritol 4-phosphate cytidylyltransferase from Alkaliphilus oremlandii (strain OhILAs) (Clostridium oremlandii (strain OhILAs)).